Here is a 644-residue protein sequence, read N- to C-terminus: MDNIGVIIKIEGNEAIVMTDDCSFKKVPIKDGMHPGQKILVPNNEVIQKENKSIKRISAVATGIAAVFLMVLSLIWINKPGRPDGIYAYIDVDINPSLNFLIDREGKVKALNPLNDDAQEIIRGVEFEDMFFSEALTQIIKISKAKGIIDENKTNYVLICAALDDNYNLQSDDKSRAQTEFEEFLDGIRESIEKACGNTVIPQTVKVPFEYLKMAKQNDVSMGRYLVYQKLEDIGVNLSIEELKSLDIDEILKKYGVGFDELFKSEYTELPYGTLQTGEDSVVSTEDVPVSPKNAFETMAVPTNTPSISTKPSATPAENPTPKLTQKPTPVPAKTGERTSTTPTPTPAPTVRNGTGSGLRGEYYNNMDFSRFQFVRIDPCIDFDWGEGTPDQSIGKDTYSVRWTGKVEPRYSETYTFYTVTDDGVRLWVDGVLLIDKWKSQSATEHSEQIYLEAGKKYDIKMEYYQHVRAASAKLMWSSKSQQKEIIPSSQLYPSDGPLPQKDVNGLSAEYYGDAELKDKRFTRIDDAINFNWDKDFPVGELKDGKFSVRWVGKIDTRYTEEYTFHTVANGGVRVWINNVLIIDNWQNQGKEAENSGKIELKAGRQYDIKVEYCNYGEPAFIKLLWSSQRQKKEVVPSKNLFAD.

Residues 1–56 (MDNIGVIIKIEGNEAIVMTDDCSFKKVPIKDGMHPGQKILVPNNEVIQKENKSIKR) lie on the Cytoplasmic side of the membrane. The RsgI N-terminal anti-sigma domain maps to 3–50 (NIGVIIKIEGNEAIVMTDDCSFKKVPIKDGMHPGQKILVPNNEVIQKE). Residues 57 to 77 (ISAVATGIAAVFLMVLSLIWI) traverse the membrane as a helical segment. At 78–644 (NKPGRPDGIY…VVPSKNLFAD (567 aa)) the chain is on the extracellular side. The span at 302–328 (PTNTPSISTKPSATPAENPTPKLTQKP) shows a compositional bias: polar residues. Residues 302 to 359 (PTNTPSISTKPSATPAENPTPKLTQKPTPVPAKTGERTSTTPTPTPAPTVRNGTGSGL) form a disordered region. 2 PA14 domains span residues 354-491 (GTGS…PSSQ) and 502-640 (KDVN…PSKN).

In terms of assembly, interacts (via RsgI N-terminal anti-sigma domain) with SigI3.

The protein resides in the cell membrane. In terms of biological role, anti-sigma factor for SigI3. Negatively regulates SigI3 activity through direct interaction. Binding of the polysaccharide substrate to the extracellular C-terminal sensing domain of RsgI3 may induce a conformational change in its N-terminal cytoplasmic region, leading to the release and activation of SigI3. The sequence is that of Anti-sigma-I factor RsgI3 from Acetivibrio thermocellus (strain ATCC 27405 / DSM 1237 / JCM 9322 / NBRC 103400 / NCIMB 10682 / NRRL B-4536 / VPI 7372) (Clostridium thermocellum).